Reading from the N-terminus, the 953-residue chain is Zinc finger protein 618 (953 aa).

Residue Met-1 is modified to N-acetylmethionine. Residues 1–56 (MSQPDGAAAPQVDGASAPGRKSAVNRERLKRSQKSSKVEGPEPVPAEASLSAEQGT) are disordered. Residues Lys-63 and Lys-81 each participate in a glycyl lysine isopeptide (Lys-Gly) (interchain with G-Cter in SUMO2) cross-link. 2 C2H2-type zinc fingers span residues 146–168 (YECGICGKKYKYYNCFQTHVRAH) and 187–209 (YTCDICGKKYKYYSCFQEHRDLH). A Glycyl lysine isopeptide (Lys-Gly) (interchain with G-Cter in SUMO2) cross-link involves residue Lys-238. A C2H2-type 3 zinc finger spans residues 255-277 (YTCEFCGKQYKYYTPYQEHVALH). Disordered stretches follow at residues 283–305 (APGWEPPEDPDTGSECSHPEVTP) and 337–390 (TPPA…SSEP). A compositionally biased stretch (polar residues) spans 339–354 (PATQTQTFRAPNSGSP). The segment covering 365 to 379 (FSRRVESKAQNHFEE) has biased composition (basic and acidic residues). A C2H2-type 4 zinc finger spans residues 391-413 (YTCGACGIQFQFYSNLLEHMQSH). Residues 419–428 (NNITSNQSRS) show a composition bias toward polar residues. A disordered region spans residues 419–461 (NNITSNQSRSPPAAVEEKWKPQAQRNSANNTTTSGLTPNSVIP). A Glycyl lysine isopeptide (Lys-Gly) (interchain with G-Cter in SUMO2) cross-link involves residue Lys-436. Residues 441–458 (AQRNSANNTTTSGLTPNS) show a composition bias toward polar residues.

The protein belongs to the krueppel C2H2-type zinc-finger protein family. In terms of assembly, interacts with UHRF2.

It localises to the nucleus. It is found in the chromosome. Its function is as follows. Regulates UHRF2 function as a specific 5-hydroxymethylcytosine (5hmC) reader by regulating its chromatin localization. The protein is Zinc finger protein 618 (Znf618) of Mus musculus (Mouse).